A 198-amino-acid chain; its full sequence is Elongation factor Ts (198 aa).

Residues S82–V85 form an involved in Mg(2+) ion dislocation from EF-Tu region.

Belongs to the EF-Ts family.

The protein localises to the cytoplasm. Its function is as follows. Associates with the EF-Tu.GDP complex and induces the exchange of GDP to GTP. It remains bound to the aminoacyl-tRNA.EF-Tu.GTP complex up to the GTP hydrolysis stage on the ribosome. The chain is Elongation factor Ts from Desulfosudis oleivorans (strain DSM 6200 / JCM 39069 / Hxd3) (Desulfococcus oleovorans).